The following is a 596-amino-acid chain: Elongation factor 4 (596 aa).

Residues 2–183 (KNIRNFSIIA…AIVDRIPAPV (182 aa)) form the tr-type G domain. GTP contacts are provided by residues 14–19 (DHGKST) and 130–133 (NKID).

The protein belongs to the TRAFAC class translation factor GTPase superfamily. Classic translation factor GTPase family. LepA subfamily.

It is found in the cell inner membrane. It catalyses the reaction GTP + H2O = GDP + phosphate + H(+). Functionally, required for accurate and efficient protein synthesis under certain stress conditions. May act as a fidelity factor of the translation reaction, by catalyzing a one-codon backward translocation of tRNAs on improperly translocated ribosomes. Back-translocation proceeds from a post-translocation (POST) complex to a pre-translocation (PRE) complex, thus giving elongation factor G a second chance to translocate the tRNAs correctly. Binds to ribosomes in a GTP-dependent manner. The sequence is that of Elongation factor 4 from Sulfurimonas denitrificans (strain ATCC 33889 / DSM 1251) (Thiomicrospira denitrificans (strain ATCC 33889 / DSM 1251)).